We begin with the raw amino-acid sequence, 328 residues long: Dihydroorotate dehydrogenase (quinone), mitochondrial (328 aa).

A helical membrane pass occupies residues 21-38 (AHGLSIAGLKTGLVTGSA). FMN is bound by residues 61 to 65 (AGYDK) and Thr85. Lys65 is a substrate binding site. A substrate-binding site is contributed by 110–114 (NRLGF). Residues Asn139 and Asn170 each contribute to the FMN site. 170-175 (NISSPN) contacts substrate. The active-site Nucleophile is Ser173. The FMN site is built by Lys215 and Ser243. 244–245 (NT) lines the substrate pocket. FMN contacts are provided by Gly266 and Gly295.

Belongs to the dihydroorotate dehydrogenase family. Type 2 subfamily. It depends on FMN as a cofactor.

It is found in the mitochondrion inner membrane. It catalyses the reaction (S)-dihydroorotate + a quinone = orotate + a quinol. Its pathway is pyrimidine metabolism; UMP biosynthesis via de novo pathway; orotate from (S)-dihydroorotate (quinone route): step 1/1. Functionally, catalyzes the conversion of dihydroorotate to orotate with quinone as electron acceptor. This is Dihydroorotate dehydrogenase (quinone), mitochondrial (URA1) from Cyclocybe aegerita (Black poplar mushroom).